The chain runs to 607 residues: MVSNKNLLPIIYIFFIILYFGDVAKSQYFPLDKGATCQKYRGDSPGIQLCDGFLSNPNSIYINSTSSQEAIQAQGNLVRQYINFYKSFESCKNPRTFALLCAFLFPECEKYTDPVSKVTYAYPILPCYNNCLNMTTSCQISTSRLSCATKYTFENISYSVFPKNTTTYQIDSLSYTNTCENTDLIANSQNTSIQQCFEPLVYHVSTDEIHDKSIGYIFPSTNTTCVVGCPAPLYYANQWRNIYRLSDVLSILSCILTLFLVITLGIINPKVSRFDKINVMLLSSIFLQAFSGALMTFNGTENTLCPEDGRFASYIDRMCVATGFLLHGSSLLVVQWWCVLSFEVWFTIFQVGKKQKDRFIYYLVASLIIAWIPPIVSISKNEYSGGPANPFCWLTTFNYRRFAFWLPMGIFLCLGGVFLILLMREIYVIVSGNVQSTKESRFKVLKMEAKPIISLIMYFSCLLYLFIYDQWINNHMHVYTDSIPSYALCLLTSTSTNDCLLKAPDITGLGYFIYSIRVFGVYAFIIYGISKKTLQIWKYNYFVVFIGQKIEQFTNATTTAKSSNSNNSSTTNNISVKASSNMEYETRQENENGDSQSVELDSNSDAL.

Positions 1 to 26 (MVSNKNLLPIIYIFFIILYFGDVAKS) are cleaved as a signal peptide. At 27 to 247 (QYFPLDKGAT…QWRNIYRLSD (221 aa)) the chain is on the extracellular side. Residues 32-182 (DKGATCQKYR…LSYTNTCENT (151 aa)) form the FZ domain. Cystine bridges form between C37–C108, C50–C101, and C127–C179. N-linked (GlcNAc...) asparagine glycans are attached at residues N63, N133, N155, N164, N190, and N222. The helical transmembrane segment at 248–268 (VLSILSCILTLFLVITLGIIN) threads the bilayer. The Cytoplasmic segment spans residues 269–276 (PKVSRFDK). A helical membrane pass occupies residues 277-297 (INVMLLSSIFLQAFSGALMTF). N298 is a glycosylation site (N-linked (GlcNAc...) asparagine). The Extracellular portion of the chain corresponds to 298 to 330 (NGTENTLCPEDGRFASYIDRMCVATGFLLHGSS). A helical membrane pass occupies residues 331 to 351 (LLVVQWWCVLSFEVWFTIFQV). The Cytoplasmic segment spans residues 352-358 (GKKQKDR). Residues 359-379 (FIYYLVASLIIAWIPPIVSIS) form a helical membrane-spanning segment. Residues 380–401 (KNEYSGGPANPFCWLTTFNYRR) lie on the Extracellular side of the membrane. Residues 402-422 (FAFWLPMGIFLCLGGVFLILL) form a helical membrane-spanning segment. Over 423-451 (MREIYVIVSGNVQSTKESRFKVLKMEAKP) the chain is Cytoplasmic. A helical membrane pass occupies residues 452–472 (IISLIMYFSCLLYLFIYDQWI). Over 473 to 508 (NNHMHVYTDSIPSYALCLLTSTSTNDCLLKAPDITG) the chain is Extracellular. A helical transmembrane segment spans residues 509-529 (LGYFIYSIRVFGVYAFIIYGI). The Cytoplasmic segment spans residues 530-607 (SKKTLQIWKY…VELDSNSDAL (78 aa)). The Lys-Thr-X-X-X-Trp motif, mediates interaction with the PDZ domain of Dvl family members signature appears at 532 to 537 (KTLQIW). The segment covering 559 to 575 (TAKSSNSNNSSTTNNIS) has biased composition (low complexity). Residues 559–607 (TAKSSNSNNSSTTNNISVKASSNMEYETRQENENGDSQSVELDSNSDAL) form a disordered region. The span at 593-607 (GDSQSVELDSNSDAL) shows a compositional bias: polar residues.

Belongs to the G-protein coupled receptor Fz/Smo family.

It localises to the membrane. In Dictyostelium discoideum (Social amoeba), this protein is Frizzled and smoothened-like protein J (fslJ-1).